We begin with the raw amino-acid sequence, 93 residues long: MSITRERKSELISEYCLKKDDTGSSFVQCAILSERIRNLTEHLKVHKKDFHCRRGLMVLVCRRRNVLQYVRKKYGDSEYLALIKRLGIRDIFH.

Belongs to the universal ribosomal protein uS15 family. As to quaternary structure, part of the 30S ribosomal subunit. Forms a bridge to the 50S subunit in the 70S ribosome, contacting the 23S rRNA.

Functionally, one of the primary rRNA binding proteins, it binds directly to 16S rRNA where it helps nucleate assembly of the platform of the 30S subunit by binding and bridging several RNA helices of the 16S rRNA. In terms of biological role, forms an intersubunit bridge (bridge B4) with the 23S rRNA of the 50S subunit in the ribosome. In Ehrlichia chaffeensis (strain ATCC CRL-10679 / Arkansas), this protein is Small ribosomal subunit protein uS15.